The following is a 460-amino-acid chain: Acetyl-CoA decarbonylase/synthase complex subunit beta (460 aa).

Cysteine 188, cysteine 191, cysteine 277, and cysteine 279 together coordinate [Ni-Fe-S] cluster. A compositionally biased stretch (acidic residues) spans 402–416 (EETEPEEEEVEEAYP). The disordered stretch occupies residues 402 to 422 (EETEPEEEEVEEAYPEETPIP).

Belongs to the CdhC family. In terms of assembly, monomer. The ACDS complex is made up of alpha, epsilon, beta, gamma and delta chains with a probable stoichiometry of (alpha(2)epsilon(2))(4)-beta(8)-(gamma(1)delta(1))(8). It depends on [Ni-Fe-S] cluster as a cofactor.

The enzyme catalyses Co(I)-[corrinoid Fe-S protein] + acetyl-CoA + H(+) = methyl-Co(III)-[corrinoid Fe-S protein] + CO + CoA. Its function is as follows. Part of a complex that catalyzes the reversible cleavage of acetyl-CoA, allowing autotrophic growth from CO(2). The alpha-epsilon complex generates CO from CO(2), while the beta subunit (this protein) combines the CO with CoA and a methyl group to form acetyl-CoA. The methyl group, which is incorporated into acetyl-CoA, is transferred to the beta subunit by a corrinoid iron-sulfur protein (the gamma-delta complex). In Methanothermobacter thermautotrophicus (strain ATCC 29096 / DSM 1053 / JCM 10044 / NBRC 100330 / Delta H) (Methanobacterium thermoautotrophicum), this protein is Acetyl-CoA decarbonylase/synthase complex subunit beta.